Here is a 491-residue protein sequence, read N- to C-terminus: Aspartyl/glutamyl-tRNA(Asn/Gln) amidotransferase subunit B (491 aa).

This sequence belongs to the GatB/GatE family. GatB subfamily. Heterotrimer of A, B and C subunits.

It carries out the reaction L-glutamyl-tRNA(Gln) + L-glutamine + ATP + H2O = L-glutaminyl-tRNA(Gln) + L-glutamate + ADP + phosphate + H(+). The enzyme catalyses L-aspartyl-tRNA(Asn) + L-glutamine + ATP + H2O = L-asparaginyl-tRNA(Asn) + L-glutamate + ADP + phosphate + 2 H(+). Functionally, allows the formation of correctly charged Asn-tRNA(Asn) or Gln-tRNA(Gln) through the transamidation of misacylated Asp-tRNA(Asn) or Glu-tRNA(Gln) in organisms which lack either or both of asparaginyl-tRNA or glutaminyl-tRNA synthetases. The reaction takes place in the presence of glutamine and ATP through an activated phospho-Asp-tRNA(Asn) or phospho-Glu-tRNA(Gln). This Burkholderia ambifaria (strain ATCC BAA-244 / DSM 16087 / CCUG 44356 / LMG 19182 / AMMD) (Burkholderia cepacia (strain AMMD)) protein is Aspartyl/glutamyl-tRNA(Asn/Gln) amidotransferase subunit B.